We begin with the raw amino-acid sequence, 240 residues long: Probable Ni/Fe-hydrogenase B-type cytochrome subunit (240 aa).

4 consecutive transmembrane segments (helical) span residues 31–51 (LWHW…YFIG), 75–95 (FAAG…AFVG), 142–163 (LAMF…FALY), and 196–213 (LGMW…YLAV).

Belongs to the HupC/HyaC/HydC family.

It is found in the cell membrane. In terms of biological role, probable b-type cytochrome. The sequence is that of Probable Ni/Fe-hydrogenase B-type cytochrome subunit (hoxZ) from Azotobacter vinelandii.